The chain runs to 368 residues: Peptide chain release factor 2 (368 aa).

The disordered stretch occupies residues glutamate 36–serine 56. At glutamine 250 the chain carries N5-methylglutamine.

Belongs to the prokaryotic/mitochondrial release factor family. Methylated by PrmC. Methylation increases the termination efficiency of RF2.

Its subcellular location is the cytoplasm. Its function is as follows. Peptide chain release factor 2 directs the termination of translation in response to the peptide chain termination codons UGA and UAA. The chain is Peptide chain release factor 2 from Corynebacterium aurimucosum (strain ATCC 700975 / DSM 44827 / CIP 107346 / CN-1) (Corynebacterium nigricans).